The chain runs to 321 residues: Ornithine carbamoyltransferase (321 aa).

Residues 53–56 (STRT), Gln-80, Arg-104, and 131–134 (HPCQ) each bind carbamoyl phosphate. L-ornithine contacts are provided by residues Asn-166, Asp-230, and 234–235 (SM). Carbamoyl phosphate is bound by residues 270 to 271 (CL) and Arg-298.

Belongs to the aspartate/ornithine carbamoyltransferase superfamily. OTCase family.

It is found in the cytoplasm. The catalysed reaction is carbamoyl phosphate + L-ornithine = L-citrulline + phosphate + H(+). Its pathway is amino-acid degradation; L-arginine degradation via ADI pathway; carbamoyl phosphate from L-arginine: step 2/2. Its function is as follows. Reversibly catalyzes the transfer of the carbamoyl group from carbamoyl phosphate (CP) to the N(epsilon) atom of ornithine (ORN) to produce L-citrulline. The polypeptide is Ornithine carbamoyltransferase (Bifidobacterium longum subsp. infantis (strain ATCC 15697 / DSM 20088 / JCM 1222 / NCTC 11817 / S12)).